The sequence spans 304 residues: N-acetylmuramic acid 6-phosphate etherase (304 aa).

An SIS domain is found at I62–K225. The active-site Proton donor is the E90. Residue E121 is part of the active site.

Belongs to the GCKR-like family. MurNAc-6-P etherase subfamily. Homodimer.

It carries out the reaction N-acetyl-D-muramate 6-phosphate + H2O = N-acetyl-D-glucosamine 6-phosphate + (R)-lactate. It participates in amino-sugar metabolism; 1,6-anhydro-N-acetylmuramate degradation. The protein operates within amino-sugar metabolism; N-acetylmuramate degradation. It functions in the pathway cell wall biogenesis; peptidoglycan recycling. In terms of biological role, specifically catalyzes the cleavage of the D-lactyl ether substituent of MurNAc 6-phosphate, producing GlcNAc 6-phosphate and D-lactate. Together with AnmK, is also required for the utilization of anhydro-N-acetylmuramic acid (anhMurNAc) either imported from the medium or derived from its own cell wall murein, and thus plays a role in cell wall recycling. The chain is N-acetylmuramic acid 6-phosphate etherase from Glaesserella parasuis serovar 5 (strain SH0165) (Haemophilus parasuis).